The primary structure comprises 149 residues: UPF0179 protein MA_3685 (149 aa).

It belongs to the UPF0179 family.

The chain is UPF0179 protein MA_3685 from Methanosarcina acetivorans (strain ATCC 35395 / DSM 2834 / JCM 12185 / C2A).